The sequence spans 179 residues: Large ribosomal subunit protein uL15 (179 aa).

Belongs to the universal ribosomal protein uL15 family. In terms of assembly, part of the 50S ribosomal subunit.

In terms of biological role, binds to the 23S rRNA. This is Large ribosomal subunit protein uL15 from Archaeoglobus fulgidus (strain ATCC 49558 / DSM 4304 / JCM 9628 / NBRC 100126 / VC-16).